The primary structure comprises 612 residues: Beta-mannosyltransferase 5 (612 aa).

Over 1-12 (MVQKQYRFAPKS) the chain is Cytoplasmic. The helical transmembrane segment at 13-33 (IFTFVFLCFVAIVVIISTSSL) threads the bilayer. The Extracellular portion of the chain corresponds to 34–612 (VQVEESLDPI…YRAHLKRWQN (579 aa)). N-linked (GlcNAc...) asparagine glycosylation is found at Asn224, Asn230, and Asn480.

It belongs to the BMT family.

It localises to the membrane. In terms of biological role, beta-mannosyltransferase involved in cell wall biosynthesis. Required for beta-1,2-mannose transfer on phospholipomannan. This Candida albicans (strain SC5314 / ATCC MYA-2876) (Yeast) protein is Beta-mannosyltransferase 5 (BMT5).